We begin with the raw amino-acid sequence, 760 residues long: Transmembrane channel-like protein 1 (760 aa).

A disordered region spans residues 1–80 (MSPKKVQIKV…RRRRLKRGAE (80 aa)). The Cytoplasmic portion of the chain corresponds to 1 to 182 (MSPKKVQIKV…KIKAIESQFG (182 aa)). The span at 13-29 (KEDETEESSSEEEEEVE) shows a compositional bias: acidic residues. The span at 30 to 39 (DKLPRRESLR) shows a compositional bias: basic and acidic residues. Residue S37 is modified to Phosphoserine. T45 carries the phosphothreonine modification. Over residues 50-61 (NEDDPEPEPEDE) the composition is skewed to acidic residues. A Phosphoserine modification is found at S128. A helical transmembrane segment spans residues 183-220 (SSVASYFLFLRWMYGVNMVLFILTFSLIMLPEYLWGLP). Residues 221-271 (YGSLPRKTVPRAEEASAANFGVLYDFNGLAQYSVLFYGYYDNKRTIGWMNF) lie on the Extracellular side of the membrane. Residues 272 to 303 (RLPLSYFLVGIMCIGYSFLVVLKAMTKNIGDD) traverse the membrane as a helical segment. At 304-359 (GGGDDNTFNFSWKVFTSWDYLIGNPETADNKFNSITMNFKEAITEEKAAQVEENVH) the chain is on the cytoplasmic side. S314 bears the Phosphoserine mark. The helical transmembrane segment at 360 to 390 (LIRFLRFLANFFVFLTLGGSGYLIFWAVKRS) threads the bilayer. Residues 391 to 402 (QEFAQQDPDTLG) lie on the Extracellular side of the membrane. The residue at position 400 (T400) is a Phosphothreonine. A helical membrane pass occupies residues 403-430 (WWEKNEMNMVMSLLGMFCPTLFDLFAEL). Residues 431–434 (EDYH) are Cytoplasmic-facing. A helical transmembrane segment spans residues 435-469 (PLIALKWLLGRIFALLLGNLYVFILALMDEINNKI). Residues 470 to 515 (EEEKLVKANITLWEANMIKAYNASFSENSTGPPFFVHPADVPRGPC) lie on the Extracellular side of the membrane. The helical transmembrane segment at 516–553 (WETMVGQEFVRLTVSDVLTTYVTILIGDFLRACFVRFC) threads the bilayer. Residues 554-572 (NYCWCWDLEYGYPSYTEFD) are Cytoplasmic-facing. The chain crosses the membrane as a helical span at residues 573 to 593 (ISGNVLALIFNQGMIWMGSFF). Over 594 to 596 (APS) the chain is Extracellular. A helical membrane pass occupies residues 597 to 619 (LPGINILRLHTSMYFQCWAVMCC). Topologically, residues 620–633 (NVPEARVFKASRSN) are cytoplasmic. The helical transmembrane segment at 634 to 657 (NFYLGMLLLILFLSTMPVLYMIVS) threads the bilayer. Over 658-700 (LPPSFDCGPFSGKNRMFEVIGETLEHDFPSWMAKILRQLSNPG) the chain is Extracellular. A helical membrane pass occupies residues 701–734 (LVIAVILVMVLAIYYLNATAKGQKAANLDLKKKM). Topologically, residues 735 to 760 (KMQALENKMRNKKMAAARAAAAAGRQ) are cytoplasmic.

Belongs to the TMC family. As to quaternary structure, forms the MET channel complosed of TMC dimer (TMC1 or TMC2), TMIE, TOMT, CIB (CIB2 or CIB3), LHFPL5 and PDH15. The interaction of TMC1 and TMC2 with TOMT is required for the transportation of TMC1/2 into the stereocilia of hair cells. Interacts (via N-terminus) with both isoforms CD1 and CD3 of PCDH15. Can form a heterodimer with TMC2, TMC5 or TMC7. In terms of tissue distribution, detected in fetal cochlea, and at low levels in placenta and testis.

The protein resides in the cell membrane. The catalysed reaction is Ca(2+)(in) = Ca(2+)(out). Pore-forming subunit of the mechanotransducer (MET) non-selective cation channel complex located at the tips of stereocilia of cochlear hair cells and that mediates sensory transduction in the auditory system. The MET complex is composed of two dimeric pore-forming ion-conducting transmembrane TMC (TMC1 or TMC2) subunits, and aided by several auxiliary proteins including LHFPL5, TMIE, CIB2/3 and TOMT, and the tip-link PCDH15. MET channel is activated by tension in the tip-link extending from the side wall of one stereocilium to the tip of the adjacent shorter stereocilium, where the channel is located. TMC1 MET channel is highly permeable to calcium and likely transports monovalent cations. Also involved in vestibular hair cells transduction current. This Homo sapiens (Human) protein is Transmembrane channel-like protein 1.